The primary structure comprises 165 residues: Ribosome maturation factor RimM (165 aa).

The PRC barrel domain occupies 94–165 (EDEFYIADLT…YVILNYQREA (72 aa)).

This sequence belongs to the RimM family. Binds ribosomal protein uS19.

It localises to the cytoplasm. Functionally, an accessory protein needed during the final step in the assembly of 30S ribosomal subunit, possibly for assembly of the head region. Essential for efficient processing of 16S rRNA. May be needed both before and after RbfA during the maturation of 16S rRNA. It has affinity for free ribosomal 30S subunits but not for 70S ribosomes. The protein is Ribosome maturation factor RimM of Rickettsia conorii (strain ATCC VR-613 / Malish 7).